We begin with the raw amino-acid sequence, 434 residues long: Tyrosine-protein phosphatase non-receptor type 1 (434 aa).

A Tyrosine-protein phosphatase domain is found at 3–277 (IEKEFHRLDQ…RFSYLAVIEG (275 aa)). Ser-50 bears the Phosphoserine mark. Substrate contacts are provided by residues Asp-181, 215–221 (CSAGIGR), and Gln-262. The active-site Phosphocysteine intermediate is the Cys-215. The disordered stretch occupies residues 291–319 (WKELSNEDLDPPPEHTPPPPRPPKRTSEM).

Belongs to the protein-tyrosine phosphatase family. Non-receptor class 1 subfamily. In terms of assembly, interacts with EPHA3 (phosphorylated); dephosphorylates EPHA3 and may regulate its trafficking and function. Interacts with MET. Interacts with NCK1. Post-translationally, phosphorylated on serine and threonine residues near the N-terminus by casein kinase II (CK2).

It localises to the endoplasmic reticulum membrane. It catalyses the reaction O-phospho-L-tyrosyl-[protein] + H2O = L-tyrosyl-[protein] + phosphate. May play an important role in CKII- and p60c-src-induced signal transduction cascades. May regulate the EFNA5-EPHA3 signaling pathway which modulates cell reorganization and cell-cell repulsion. May also regulate the hepatocyte growth factor receptor signaling pathway through dephosphorylation of MET. This chain is Tyrosine-protein phosphatase non-receptor type 1 (PTPN1), found in Gallus gallus (Chicken).